The primary structure comprises 238 residues: Uridylate kinase (238 aa).

11–14 (KLSG) lines the ATP pocket. Position 52 (G52) interacts with UMP. The ATP site is built by G53 and R57. UMP contacts are provided by residues D72 and 134 to 141 (TGFSYFTT). Positions 162, 168, and 171 each coordinate ATP.

This sequence belongs to the UMP kinase family. Homohexamer.

Its subcellular location is the cytoplasm. It catalyses the reaction UMP + ATP = UDP + ADP. It functions in the pathway pyrimidine metabolism; CTP biosynthesis via de novo pathway; UDP from UMP (UMPK route): step 1/1. Inhibited by UTP. In terms of biological role, catalyzes the reversible phosphorylation of UMP to UDP. The polypeptide is Uridylate kinase (Mesoplasma florum (strain ATCC 33453 / NBRC 100688 / NCTC 11704 / L1) (Acholeplasma florum)).